The following is a 161-amino-acid chain: Lipoprotein signal peptidase (161 aa).

The next 4 helical transmembrane spans lie at 8-28 (LKYF…KYLA), 40-60 (ITSF…SLLS), 67-87 (QMIM…YLII), and 91-111 (ITEK…LGNF). Active-site residues include aspartate 122 and aspartate 140. Residues 136-156 (FNIADSAITCGVVILIAASLF) form a helical membrane-spanning segment.

It belongs to the peptidase A8 family.

The protein localises to the cell inner membrane. It carries out the reaction Release of signal peptides from bacterial membrane prolipoproteins. Hydrolyzes -Xaa-Yaa-Zaa-|-(S,diacylglyceryl)Cys-, in which Xaa is hydrophobic (preferably Leu), and Yaa (Ala or Ser) and Zaa (Gly or Ala) have small, neutral side chains.. The protein operates within protein modification; lipoprotein biosynthesis (signal peptide cleavage). This protein specifically catalyzes the removal of signal peptides from prolipoproteins. The chain is Lipoprotein signal peptidase from Francisella tularensis subsp. tularensis (strain FSC 198).